A 352-amino-acid chain; its full sequence is SNF1-related protein kinase regulatory subunit gamma-like PV42a (352 aa).

CBS domains follow at residues 24–106, 122–196, 210–281, and 297–352; these read RNRR…LSDL, LEGL…FDDL, VNDS…ELQT, and KERE…STLS.

This sequence belongs to the 5'-AMP-activated protein kinase gamma subunit family. In terms of tissue distribution, expressed highly in rosette leaves, cauline leaves, open flowers, developing siliques and dry seeds, but at a low level in stems and floral buds.

Its function is as follows. Plays redundant role with PV42b in regulating male gametogenesis and pollen tube guidance. In Arabidopsis thaliana (Mouse-ear cress), this protein is SNF1-related protein kinase regulatory subunit gamma-like PV42a (PV42A).